A 380-amino-acid chain; its full sequence is WAT1-related protein At2g37460 (380 aa).

The next 10 helical transmembrane spans lie at 16 to 36 (FISMVVLQVGLAGMDILSKAV), 45 to 65 (VLVVYRHAVATIVMAPFAFYF), 71 to 91 (PKMTLMIFFKISLLGLLEPVI), 107 to 127 (FATAMYNVLPAITFVLAYIFG), 142 to 162 (VVGTLATVGGAMIMTLVKGPV), 187 to 207 (GAVLVTIGCFSYACFMILQAI), 216 to 236 (LSLTAWICLMGTIEGTAVALV), 254 to 274 (LTATYSGIVCSALAYYVGGVV), 282 to 302 (FVTAFSPLCMIIVAIMSTIIF), and 306 to 326 (MYLGRVLGAVVICAGLYLVIW). The region spanning 27–134 (AGMDILSKAV…IFGLERVKLR (108 aa)) is the EamA 1 domain. The 130-residue stretch at 196–325 (FSYACFMILQ…VICAGLYLVI (130 aa)) folds into the EamA 2 domain.

The protein belongs to the drug/metabolite transporter (DMT) superfamily. Plant drug/metabolite exporter (P-DME) (TC 2.A.7.4) family.

It is found in the membrane. This chain is WAT1-related protein At2g37460, found in Arabidopsis thaliana (Mouse-ear cress).